Reading from the N-terminus, the 111-residue chain is Holo-[acyl-carrier-protein] synthase (111 aa).

Mg(2+)-binding residues include Asp-8 and Glu-57.

It belongs to the P-Pant transferase superfamily. AcpS family. Mg(2+) serves as cofactor.

The protein resides in the cytoplasm. The enzyme catalyses apo-[ACP] + CoA = holo-[ACP] + adenosine 3',5'-bisphosphate + H(+). Transfers the 4'-phosphopantetheine moiety from coenzyme A to a Ser of acyl-carrier-protein. The chain is Holo-[acyl-carrier-protein] synthase from Mycoplasmoides gallisepticum (strain R(low / passage 15 / clone 2)) (Mycoplasma gallisepticum).